Consider the following 241-residue polypeptide: tRNA (guanine-N(1)-)-methyltransferase (241 aa).

Residues Gly-112 and 131 to 136 each bind S-adenosyl-L-methionine; that span reads LGDFVL.

The protein belongs to the RNA methyltransferase TrmD family. Homodimer.

Its subcellular location is the cytoplasm. It catalyses the reaction guanosine(37) in tRNA + S-adenosyl-L-methionine = N(1)-methylguanosine(37) in tRNA + S-adenosyl-L-homocysteine + H(+). Functionally, specifically methylates guanosine-37 in various tRNAs. The protein is tRNA (guanine-N(1)-)-methyltransferase of Clostridium novyi (strain NT).